The following is a 245-amino-acid chain: Adapter protein MecA (245 aa).

It belongs to the MecA family. In terms of assembly, homodimer.

Its function is as follows. Enables the recognition and targeting of unfolded and aggregated proteins to the ClpC protease or to other proteins involved in proteolysis. This Streptococcus pneumoniae (strain ATCC BAA-255 / R6) protein is Adapter protein MecA.